The following is a 370-amino-acid chain: tRNA-specific 2-thiouridylase MnmA (370 aa).

ATP-binding positions include glycine 12 to serine 19 and methionine 38. Positions asparagine 98–aspartate 100 are interaction with target base in tRNA. The active-site Nucleophile is the cysteine 103. An intrachain disulfide couples cysteine 103 to cysteine 201. Residue glycine 127 coordinates ATP. An interaction with tRNA region spans residues lysine 151–glutamine 153. Cysteine 201 acts as the Cysteine persulfide intermediate in catalysis. Positions arginine 319–tyrosine 320 are interaction with tRNA.

It belongs to the MnmA/TRMU family.

The protein resides in the cytoplasm. It carries out the reaction S-sulfanyl-L-cysteinyl-[protein] + uridine(34) in tRNA + AH2 + ATP = 2-thiouridine(34) in tRNA + L-cysteinyl-[protein] + A + AMP + diphosphate + H(+). Catalyzes the 2-thiolation of uridine at the wobble position (U34) of tRNA, leading to the formation of s(2)U34. The polypeptide is tRNA-specific 2-thiouridylase MnmA (Verminephrobacter eiseniae (strain EF01-2)).